The sequence spans 523 residues: Apoptosis inhibitor 5-B (523 aa).

The ARM-like and Heat-like helical repeats stretch occupies residues methionine 1–phenylalanine 360. A disordered region spans residues valine 446–tyrosine 523. A Nuclear localization signal motif is present at residues lysine 454–arginine 475. Positions glycine 502–glycine 515 are enriched in gly residues.

The protein belongs to the API5 family. As to quaternary structure, monomer.

Its subcellular location is the nucleus. May be an antiapoptotic factor. The chain is Apoptosis inhibitor 5-B (api5-b) from Xenopus laevis (African clawed frog).